The primary structure comprises 317 residues: Pantothenate kinase (317 aa).

95-102 (GSVAVGKS) contributes to the ATP binding site.

This sequence belongs to the prokaryotic pantothenate kinase family.

Its subcellular location is the cytoplasm. The catalysed reaction is (R)-pantothenate + ATP = (R)-4'-phosphopantothenate + ADP + H(+). It participates in cofactor biosynthesis; coenzyme A biosynthesis; CoA from (R)-pantothenate: step 1/5. In Rhodopseudomonas palustris (strain BisB18), this protein is Pantothenate kinase.